The sequence spans 523 residues: 2-isopropylmalate synthase (523 aa).

The 263-residue stretch at 5–267 folds into the Pyruvate carboxyltransferase domain; the sequence is VIIFDTTLRD…HTAINHQEIW (263 aa). Aspartate 14, histidine 202, histidine 204, and asparagine 238 together coordinate Mn(2+). The interval 392 to 523 is regulatory domain; it reads RLDYFSVQSG…QHNENNKETV (132 aa).

Belongs to the alpha-IPM synthase/homocitrate synthase family. LeuA type 1 subfamily. As to quaternary structure, homodimer. Requires Mn(2+) as cofactor.

Its subcellular location is the cytoplasm. It carries out the reaction 3-methyl-2-oxobutanoate + acetyl-CoA + H2O = (2S)-2-isopropylmalate + CoA + H(+). The protein operates within amino-acid biosynthesis; L-leucine biosynthesis; L-leucine from 3-methyl-2-oxobutanoate: step 1/4. Its function is as follows. Catalyzes the condensation of the acetyl group of acetyl-CoA with 3-methyl-2-oxobutanoate (2-ketoisovalerate) to form 3-carboxy-3-hydroxy-4-methylpentanoate (2-isopropylmalate). In Escherichia coli O81 (strain ED1a), this protein is 2-isopropylmalate synthase.